The primary structure comprises 727 residues: Beta-galactosidase 2 (727 aa).

Positions 1 to 27 are cleaved as a signal peptide; it reads MSMHFRNKAWIILAILCFSSLIHSTEA. The active-site Proton donor is the glutamate 185. The active-site Nucleophile is glutamate 254. Asparagine 255 is a glycosylation site (N-linked (GlcNAc...) asparagine).

This sequence belongs to the glycosyl hydrolase 35 family. Ubiquitous, with higher expression levels in roots and siliques.

It localises to the secreted. It is found in the extracellular space. The protein localises to the apoplast. It catalyses the reaction Hydrolysis of terminal non-reducing beta-D-galactose residues in beta-D-galactosides.. The polypeptide is Beta-galactosidase 2 (BGAL2) (Arabidopsis thaliana (Mouse-ear cress)).